A 514-amino-acid polypeptide reads, in one-letter code: Protein nucleotidyltransferase YdiU (514 aa).

Residues Gly90, Gly92, Arg93, Lys113, Asp125, Gly126, Arg176, and Arg183 each coordinate ATP. The active-site Proton acceptor is the Asp267. 2 residues coordinate Mg(2+): Asn268 and Asp277. Asp277 contacts ATP.

The protein belongs to the SELO family. Mg(2+) serves as cofactor. The cofactor is Mn(2+).

The enzyme catalyses L-seryl-[protein] + ATP = 3-O-(5'-adenylyl)-L-seryl-[protein] + diphosphate. It catalyses the reaction L-threonyl-[protein] + ATP = 3-O-(5'-adenylyl)-L-threonyl-[protein] + diphosphate. The catalysed reaction is L-tyrosyl-[protein] + ATP = O-(5'-adenylyl)-L-tyrosyl-[protein] + diphosphate. It carries out the reaction L-histidyl-[protein] + UTP = N(tele)-(5'-uridylyl)-L-histidyl-[protein] + diphosphate. The enzyme catalyses L-seryl-[protein] + UTP = O-(5'-uridylyl)-L-seryl-[protein] + diphosphate. It catalyses the reaction L-tyrosyl-[protein] + UTP = O-(5'-uridylyl)-L-tyrosyl-[protein] + diphosphate. Nucleotidyltransferase involved in the post-translational modification of proteins. It can catalyze the addition of adenosine monophosphate (AMP) or uridine monophosphate (UMP) to a protein, resulting in modifications known as AMPylation and UMPylation. The protein is Protein nucleotidyltransferase YdiU of Photobacterium profundum (strain SS9).